The primary structure comprises 179 residues: Large ribosomal subunit protein uL6 (179 aa).

Belongs to the universal ribosomal protein uL6 family. Part of the 50S ribosomal subunit.

Functionally, this protein binds to the 23S rRNA, and is important in its secondary structure. It is located near the subunit interface in the base of the L7/L12 stalk, and near the tRNA binding site of the peptidyltransferase center. The polypeptide is Large ribosomal subunit protein uL6 (Leptospira interrogans serogroup Icterohaemorrhagiae serovar copenhageni (strain Fiocruz L1-130)).